A 550-amino-acid polypeptide reads, in one-letter code: Hydroxylamine reductase (550 aa).

[2Fe-2S] cluster-binding residues include Cys3, Cys6, Cys18, and Cys25. 8 residues coordinate hybrid [4Fe-2O-2S] cluster: His249, Glu273, Cys317, Cys405, Cys433, Cys458, Glu492, and Lys494. At Cys405 the chain carries Cysteine persulfide.

This sequence belongs to the HCP family. [2Fe-2S] cluster serves as cofactor. The cofactor is hybrid [4Fe-2O-2S] cluster.

The protein localises to the cytoplasm. The enzyme catalyses A + NH4(+) + H2O = hydroxylamine + AH2 + H(+). Catalyzes the reduction of hydroxylamine to form NH(3) and H(2)O. The chain is Hydroxylamine reductase from Salmonella paratyphi A (strain ATCC 9150 / SARB42).